The sequence spans 301 residues: ATP synthase gamma chain (301 aa).

The protein belongs to the ATPase gamma chain family. As to quaternary structure, F-type ATPases have 2 components, CF(1) - the catalytic core - and CF(0) - the membrane proton channel. CF(1) has five subunits: alpha(3), beta(3), gamma(1), delta(1), epsilon(1). CF(0) has three main subunits: a, b and c.

The protein localises to the cell inner membrane. In terms of biological role, produces ATP from ADP in the presence of a proton gradient across the membrane. The gamma chain is believed to be important in regulating ATPase activity and the flow of protons through the CF(0) complex. In Helicobacter acinonychis (strain Sheeba), this protein is ATP synthase gamma chain.